Here is a 263-residue protein sequence, read N- to C-terminus: Ribosomal RNA small subunit methyltransferase A (263 aa).

S-adenosyl-L-methionine is bound by residues histidine 13, leucine 15, glycine 40, glutamate 61, aspartate 86, and asparagine 105.

Belongs to the class I-like SAM-binding methyltransferase superfamily. rRNA adenine N(6)-methyltransferase family. RsmA subfamily.

The protein localises to the cytoplasm. The catalysed reaction is adenosine(1518)/adenosine(1519) in 16S rRNA + 4 S-adenosyl-L-methionine = N(6)-dimethyladenosine(1518)/N(6)-dimethyladenosine(1519) in 16S rRNA + 4 S-adenosyl-L-homocysteine + 4 H(+). In terms of biological role, specifically dimethylates two adjacent adenosines (A1518 and A1519) in the loop of a conserved hairpin near the 3'-end of 16S rRNA in the 30S particle. May play a critical role in biogenesis of 30S subunits. The polypeptide is Ribosomal RNA small subunit methyltransferase A (Dichelobacter nodosus (strain VCS1703A)).